The primary structure comprises 198 residues: Recombination protein RecR (198 aa).

The C4-type zinc-finger motif lies at 57 to 72 (CSICGNITEEDPCEIC). The 96-residue stretch at 80 to 175 (SIILVVEEPK…TVTRLAHGLS (96 aa)) folds into the Toprim domain.

Belongs to the RecR family.

Its function is as follows. May play a role in DNA repair. It seems to be involved in an RecBC-independent recombinational process of DNA repair. It may act with RecF and RecO. The protein is Recombination protein RecR of Enterococcus faecalis (strain ATCC 700802 / V583).